Consider the following 67-residue polypeptide: Small ribosomal subunit protein eS27 (67 aa).

Residues C22, C25, C41, and C44 each contribute to the Zn(2+) site. Residues C22–C44 form a C4-type zinc finger.

The protein belongs to the eukaryotic ribosomal protein eS27 family. In terms of assembly, part of the 30S ribosomal subunit. Requires Zn(2+) as cofactor.

The sequence is that of Small ribosomal subunit protein eS27 from Pyrobaculum calidifontis (strain DSM 21063 / JCM 11548 / VA1).